Reading from the N-terminus, the 465-residue chain is uncharacterized protein (465 aa).

Positions 1-50 constitute a TRAM domain; it reads MEITDLAAEGNALCRIDDMVMFVPFAAPGDRCTVQVVKKKRNFMQGRIVS. Positions 63, 69, 72, and 168 each coordinate [4Fe-4S] cluster. Residues glutamine 293, tyrosine 322, glutamate 343, and aspartate 392 each contribute to the S-adenosyl-L-methionine site. The Nucleophile role is filled by cysteine 419.

It belongs to the class I-like SAM-binding methyltransferase superfamily. RNA M5U methyltransferase family.

This is an uncharacterized protein from Porphyromonas gingivalis (strain ATCC BAA-308 / W83).